The following is a 689-amino-acid chain: Polyribonucleotide nucleotidyltransferase (689 aa).

2 residues coordinate Mg(2+): D482 and D488. Positions 549-608 (PRMITLTIPQNKIGELIGPGGKNIRKIQEDNNVKIDIEETGRVFISGVESDGVKSAKEYV) constitute a KH domain. Positions 618 to 686 (GKIYKSRVTK…KQGRINLSIK (69 aa)) constitute an S1 motif domain.

It belongs to the polyribonucleotide nucleotidyltransferase family. Requires Mg(2+) as cofactor.

The protein localises to the cytoplasm. The catalysed reaction is RNA(n+1) + phosphate = RNA(n) + a ribonucleoside 5'-diphosphate. Its function is as follows. Involved in mRNA degradation. Catalyzes the phosphorolysis of single-stranded polyribonucleotides processively in the 3'- to 5'-direction. This is Polyribonucleotide nucleotidyltransferase from Endomicrobium trichonymphae.